Reading from the N-terminus, the 301-residue chain is Multifunctional dioxygenase ausE (301 aa).

Substrate is bound by residues Arg-72 and Gln-127. Fe cation is bound by residues His-130 and Asp-132. Residue Thr-167 participates in substrate binding. A Fe cation-binding site is contributed by His-214. Arg-226 is a substrate binding site.

It belongs to the PhyH family. In terms of assembly, homodimer. The cofactor is Fe cation.

It catalyses the reaction preaustinoid A1 + 2-oxoglutarate + O2 = preaustinoid A2 + succinate + CO2 + H2O. The catalysed reaction is preaustinoid A2 + 2-oxoglutarate + O2 = preaustinoid A3 + succinate + CO2 + H2O. It carries out the reaction berkeleyone A + 2-oxoglutarate + O2 = preaustinoid A + succinate + CO2 + H2O. It functions in the pathway secondary metabolite biosynthesis; terpenoid biosynthesis. In terms of biological role, multifunctional dioxygenase; part of the gene cluster A that mediates the biosynthesis of the fungal meroterpenoid acetoxydehydroaustin. The first step of the pathway is the synthesis of 3,5-dimethylorsellinic acid by the polyketide synthase ausA. 3,5-dimethylorsellinic acid is then prenylated by the polyprenyl transferase ausN. Further epoxidation by the FAD-dependent monooxygenase ausM and cyclization by the probable terpene cyclase ausL lead to the formation of protoaustinoid A. Protoaustinoid A is then oxidized to spiro-lactone preaustinoid A3 by the combined action of the FAD-binding monooxygenases ausB and ausC, and the dioxygenase ausE. Acid-catalyzed keto-rearrangement and ring contraction of the tetraketide portion of preaustinoid A3 by ausJ lead to the formation of preaustinoid A4. The aldo-keto reductase ausK, with the help of ausH, is involved in the next step by transforming preaustinoid A4 into isoaustinone which is in turn hydroxylated by the P450 monooxygenase ausI to form austinolide. The cytochrome P450 monooxygenase ausG then modifies austinolide to austinol. Austinol is further acetylated to austin by the O-acetyltransferase ausP, which spontaneously changes to dehydroaustin. The cytochrome P450 monooxygenase then converts dehydroaustin is into 7-dehydrodehydroaustin. The hydroxylation catalyzed by ausR permits the second O-acetyltransferase ausQ to add an additional acetyl group to the molecule, leading to the formation of acetoxydehydroaustin. Due to genetic rearrangements of the clusters and the subsequent loss of some enzymes, the end product of the Penicillium brasilianum austinoid biosynthesis clusters is acetoxydehydroaustin. The polypeptide is Multifunctional dioxygenase ausE (Penicillium brasilianum).